Consider the following 550-residue polypeptide: CTP synthase (550 aa).

The segment at 1 to 270 (MTKFVFVTGG…DRLICEELRL (270 aa)) is amidoligase domain. S13 provides a ligand contact to CTP. S13 contributes to the UTP binding site. ATP is bound by residues 14 to 19 (SLGKGI) and D71. Residues D71 and E144 each coordinate Mg(2+). CTP-binding positions include 151-153 (DIE), 191-196 (KTKPTQ), and K227. Residues 191–196 (KTKPTQ) and K227 contribute to the UTP site. The Glutamine amidotransferase type-1 domain occupies 295 to 547 (TIGMVGKYVD…VEAALASQQR (253 aa)). G356 is a binding site for L-glutamine. Catalysis depends on C383, which acts as the Nucleophile; for glutamine hydrolysis. L-glutamine-binding positions include 384 to 387 (LGMQ), E407, and R473. Active-site residues include H520 and E522.

It belongs to the CTP synthase family. In terms of assembly, homotetramer.

It carries out the reaction UTP + L-glutamine + ATP + H2O = CTP + L-glutamate + ADP + phosphate + 2 H(+). It catalyses the reaction L-glutamine + H2O = L-glutamate + NH4(+). The catalysed reaction is UTP + NH4(+) + ATP = CTP + ADP + phosphate + 2 H(+). Its pathway is pyrimidine metabolism; CTP biosynthesis via de novo pathway; CTP from UDP: step 2/2. Its activity is regulated as follows. Allosterically activated by GTP, when glutamine is the substrate; GTP has no effect on the reaction when ammonia is the substrate. The allosteric effector GTP functions by stabilizing the protein conformation that binds the tetrahedral intermediate(s) formed during glutamine hydrolysis. Inhibited by the product CTP, via allosteric rather than competitive inhibition. Catalyzes the ATP-dependent amination of UTP to CTP with either L-glutamine or ammonia as the source of nitrogen. Regulates intracellular CTP levels through interactions with the four ribonucleotide triphosphates. The sequence is that of CTP synthase from Cupriavidus necator (strain ATCC 17699 / DSM 428 / KCTC 22496 / NCIMB 10442 / H16 / Stanier 337) (Ralstonia eutropha).